A 591-amino-acid chain; its full sequence is Zinc finger protein 48 (591 aa).

Met1 bears the N-acetylmethionine mark. 2 disordered regions span residues 1–24 and 55–80; these read MEAS…IKEE and GLGK…GSND. Basic and acidic residues-rich tracts occupy residues 8–24 and 55–65; these read EFEH…IKEE and GLGKRQPRDPV. Ser12 carries the post-translational modification Phosphoserine. Lys58 is covalently cross-linked (Glycyl lysine isopeptide (Lys-Gly) (interchain with G-Cter in SUMO2)). C2H2-type zinc fingers lie at residues 83–105 and 111–133; these read AVCG…QRTH and YKCG…QRTH. Residues 131–160 are disordered; sequence RTHTGEKAYRVRPPAPGPPKMPRSRIPAGE. Lys150 participates in a covalent cross-link: Glycyl lysine isopeptide (Lys-Gly) (interchain with G-Cter in SUMO2). 2 consecutive C2H2-type zinc fingers follow at residues 163-185 and 191-213; these read TICG…QRTH and YKCG…QRTH. Residues 206 to 241 are disordered; that stretch reads RIKHQRTHRGDQLPRPVVPRRQPSPAAPAAPHRPKA. Positions 224–235 are enriched in low complexity; it reads PRRQPSPAAPAA. Lys240 is covalently cross-linked (Glycyl lysine isopeptide (Lys-Gly) (interchain with G-Cter in SUMO2)). 2 consecutive C2H2-type zinc fingers follow at residues 246–268 and 274–296; these read YICT…QRSH and FGCD…LRVH. Lys300 is covalently cross-linked (Glycyl lysine isopeptide (Lys-Gly) (interchain with G-Cter in SUMO2)). C2H2-type zinc fingers lie at residues 302–324 and 330–352; these read YLCP…LRTH and HACP…RLTH. Residues 372–429 are disordered; sequence PPPPPLGTSPSLTPRSPSHSSDGPFGLPGLEPEPGGPQAGEPPPPLAGDKPHKCPECG. Low complexity predominate over residues 379–404; the sequence is TSPSLTPRSPSHSSDGPFGLPGLEPE. A C2H2-type 9 zinc finger spans residues 423-445; that stretch reads HKCPECGKGFRRSSDLVKHHRVH. A Glycyl lysine isopeptide (Lys-Gly) (interchain with G-Cter in SUMO2) cross-link involves residue Lys449. Residues 451 to 473 form a C2H2-type 10 zinc finger; it reads YLCPECGKGFADSSARVKHLRTH. Residues 464 to 512 are disordered; the sequence is SARVKHLRTHQGERTRPPPPPSTLLRPHNPPGSVPIVPQSRVQGRPSGP. Residues 480–496 show a composition bias toward pro residues; it reads PPPPPSTLLRPHNPPGS. 2 C2H2-type zinc fingers span residues 516–538 and 544–566; these read HVCG…RRTH and YKCA…QRGH. Positions 564–591 are disordered; sequence RGHLALKPFGVGDGPPRPLKEESPAGLE. A compositionally biased stretch (basic and acidic residues) spans 581–591; the sequence is PLKEESPAGLE. Residue Lys583 forms a Glycyl lysine isopeptide (Lys-Gly) (interchain with G-Cter in SUMO2) linkage.

Belongs to the krueppel C2H2-type zinc-finger protein family.

It localises to the nucleus. In terms of biological role, may be involved in transcriptional regulation. The sequence is that of Zinc finger protein 48 (Znf48) from Mus musculus (Mouse).